The primary structure comprises 389 residues: Globin-like protein 6 (389 aa).

Residues Met-1–Val-15 are compositionally biased toward polar residues. Disordered stretches follow at residues Met-1–Ser-38, Arg-96–Ser-123, and Thr-143–Pro-185. Residues Ser-16–Ser-25 are compositionally biased toward basic residues. The region spanning His-196–Gln-347 is the Globin domain. Residues His-254 and His-286 each contribute to the heme b site. The segment at Ser-367–Met-389 is disordered. A compositionally biased stretch (basic and acidic residues) spans Lys-376–Met-389.

The protein belongs to the globin family. Expressed in the head and tail neurons and nerve cord.

May play a role as physiological sensor for oxygen via redox signaling and/or electron transport. This is Globin-like protein 6 from Caenorhabditis elegans.